The chain runs to 240 residues: CD302 antigen (240 aa).

The region spanning 40 to 160 (FQDSCYIFLQ…CEVSSVEGTL (121 aa)) is the C-type lectin domain. Residue Asn117 is glycosylated (N-linked (GlcNAc...) asparagine). Cys136 and Cys151 form a disulfide bridge. Residues 177–197 (ILISALVIASTVILTVLGAVI) form a helical membrane-spanning segment. Residues 198-240 (WFLYKRNLDSGFTTVFSTAPQSPFNDDCVLVVAEENEYAVQFD) are Cytoplasmic-facing.

It is found in the membrane. Its subcellular location is the cell projection. The protein localises to the filopodium. The protein resides in the cytoplasm. It localises to the cell cortex. Potential multifunctional C-type lectin receptor that may play roles in endocytosis and phagocytosis as well as in cell adhesion and migration. In Sus scrofa (Pig), this protein is CD302 antigen.